Consider the following 384-residue polypeptide: NAD(P) transhydrogenase subunit alpha part 1 (384 aa).

Positions 126–136 (PRISRAQSMDI) are RQD loop; involved in interaction with PntB. Residues 127-129 (RIS), 132-135 (QSMD), 180-182 (VGV), 202-204 (DVR), Gly-234, Gln-247, and Leu-266 each bind NAD(+).

It belongs to the AlaDH/PNT family. In terms of assembly, heterotrimer of two alpha chains and a beta (PntB) chain; in Rhodospirillum, the alpha chain is made of two subunits (PntAA and PntAB) and forms a dimer.

The enzyme catalyses NAD(+) + NADPH + H(+)(in) = NADH + NADP(+) + H(+)(out). In terms of biological role, the transhydrogenation between NADH and NADP is coupled to respiration and ATP hydrolysis and functions as a proton pump across the membrane. In Rhodospirillum rubrum (strain ATCC 11170 / ATH 1.1.1 / DSM 467 / LMG 4362 / NCIMB 8255 / S1), this protein is NAD(P) transhydrogenase subunit alpha part 1 (pntAA).